Reading from the N-terminus, the 450-residue chain is Methylenetetrahydrofolate--tRNA-(uracil-5-)-methyltransferase TrmFO (450 aa).

Residue 9–14 coordinates FAD; that stretch reads GGGMAG.

Belongs to the MnmG family. TrmFO subfamily. FAD is required as a cofactor.

Its subcellular location is the cytoplasm. It catalyses the reaction uridine(54) in tRNA + (6R)-5,10-methylene-5,6,7,8-tetrahydrofolate + NADH + H(+) = 5-methyluridine(54) in tRNA + (6S)-5,6,7,8-tetrahydrofolate + NAD(+). The enzyme catalyses uridine(54) in tRNA + (6R)-5,10-methylene-5,6,7,8-tetrahydrofolate + NADPH + H(+) = 5-methyluridine(54) in tRNA + (6S)-5,6,7,8-tetrahydrofolate + NADP(+). Catalyzes the folate-dependent formation of 5-methyl-uridine at position 54 (M-5-U54) in all tRNAs. This chain is Methylenetetrahydrofolate--tRNA-(uracil-5-)-methyltransferase TrmFO, found in Roseobacter denitrificans (strain ATCC 33942 / OCh 114) (Erythrobacter sp. (strain OCh 114)).